A 132-amino-acid chain; its full sequence is Small ribosomal subunit protein uS8 (132 aa).

It belongs to the universal ribosomal protein uS8 family. As to quaternary structure, part of the 30S ribosomal subunit. Contacts proteins S5 and S12.

Its function is as follows. One of the primary rRNA binding proteins, it binds directly to 16S rRNA central domain where it helps coordinate assembly of the platform of the 30S subunit. This Clostridium botulinum (strain 657 / Type Ba4) protein is Small ribosomal subunit protein uS8.